Here is a 763-residue protein sequence, read N- to C-terminus: Probable ubiquitin carboxyl-terminal hydrolase MINDY-4 (763 aa).

Residue Ser-143 is modified to Phosphoserine. The interval 154–368 (SSKRSSHKSR…SQPASLRKNQ (215 aa)) is disordered. A compositionally biased stretch (basic and acidic residues) spans 180–202 (EKTDKLPMSEPSLDTKRMGEKVR). 2 positions are modified to phosphoserine: Ser-220 and Ser-224. A compositionally biased stretch (polar residues) spans 252 to 261 (ELSTHTSTCP). Positions 267 to 278 (PASSTASTSRSP) are enriched in low complexity. Ser-296 carries the phosphoserine modification. Residues 346–355 (TQERPERAFE) are compositionally biased toward basic and acidic residues. Positions 357-368 (QGSQPASLRKNQ) are enriched in polar residues. Residue Cys-463 is the Nucleophile of the active site. Catalysis depends on His-683, which acts as the Proton acceptor.

It belongs to the MINDY deubiquitinase family. FAM188 subfamily.

The catalysed reaction is Thiol-dependent hydrolysis of ester, thioester, amide, peptide and isopeptide bonds formed by the C-terminal Gly of ubiquitin (a 76-residue protein attached to proteins as an intracellular targeting signal).. Its function is as follows. Probable hydrolase that can remove 'Lys-48'-linked conjugated ubiquitin from proteins. The protein is Probable ubiquitin carboxyl-terminal hydrolase MINDY-4 (MINDY4) of Bos taurus (Bovine).